We begin with the raw amino-acid sequence, 382 residues long: Dodecanoyl-[acyl-carrier-protein] hydrolase, chloroplastic (382 aa).

The transit peptide at methionine 1–asparagine 83 directs the protein to the chloroplast. Active-site residues include asparagine 283, histidine 285, and cysteine 320.

The protein belongs to the acyl-ACP thioesterase family. In terms of assembly, forms homodimers. In terms of tissue distribution, expressed in developing cotyledons. Not detected in leaves.

Its subcellular location is the plastid. The protein resides in the chloroplast. It catalyses the reaction dodecanoyl-[ACP] + H2O = dodecanoate + holo-[ACP] + H(+). Functionally, plays an essential role in chain termination during de novo fatty acid synthesis. High thioesterase activity for lauroyl-ACP versus other acyl-ACPs. This chain is Dodecanoyl-[acyl-carrier-protein] hydrolase, chloroplastic, found in Umbellularia californica (California bay laurel).